Here is a 388-residue protein sequence, read N- to C-terminus: Dual-specificity RNA methyltransferase RlmN (388 aa).

The Proton acceptor role is filled by glutamate 109. The Radical SAM core domain occupies 115–354; the sequence is EEDRATLCVS…TIVRKTRGDD (240 aa). Residues cysteine 122 and cysteine 359 are joined by a disulfide bond. Cysteine 129, cysteine 133, and cysteine 136 together coordinate [4Fe-4S] cluster. S-adenosyl-L-methionine-binding positions include 183 to 184, serine 215, 237 to 239, and asparagine 316; these read GE and SLH. Catalysis depends on cysteine 359, which acts as the S-methylcysteine intermediate.

It belongs to the radical SAM superfamily. RlmN family. It depends on [4Fe-4S] cluster as a cofactor.

The protein resides in the cytoplasm. It catalyses the reaction adenosine(2503) in 23S rRNA + 2 reduced [2Fe-2S]-[ferredoxin] + 2 S-adenosyl-L-methionine = 2-methyladenosine(2503) in 23S rRNA + 5'-deoxyadenosine + L-methionine + 2 oxidized [2Fe-2S]-[ferredoxin] + S-adenosyl-L-homocysteine. It carries out the reaction adenosine(37) in tRNA + 2 reduced [2Fe-2S]-[ferredoxin] + 2 S-adenosyl-L-methionine = 2-methyladenosine(37) in tRNA + 5'-deoxyadenosine + L-methionine + 2 oxidized [2Fe-2S]-[ferredoxin] + S-adenosyl-L-homocysteine. Specifically methylates position 2 of adenine 2503 in 23S rRNA and position 2 of adenine 37 in tRNAs. m2A2503 modification seems to play a crucial role in the proofreading step occurring at the peptidyl transferase center and thus would serve to optimize ribosomal fidelity. In Klebsiella pneumoniae (strain 342), this protein is Dual-specificity RNA methyltransferase RlmN.